A 603-amino-acid polypeptide reads, in one-letter code: Leucine-rich repeat-containing protein 40 (603 aa).

The segment at 1-27 (MAAARRARAGDPRAGFRRAAEEQSPAV) is disordered. 20 LRR repeats span residues 83–104 (DLTK…VRLL), 106–127 (ALTV…LGQL), 129–150 (NLQK…LLQL), 152–173 (HLKG…FGQL), 175–196 (SLEE…FALL), 198–219 (NLVR…ISAM), 221–242 (SLRQ…LASM), 244–265 (SLEQ…PSCK), 266–286 (LLKE…ENLK), 290–311 (SLSV…ITLL), 313–335 (KLER…GNLS), 336–357 (QLKF…LLQK), 401–422 (TLKL…VFSA), 427–449 (PVTS…VELK), 451–473 (SVCD…CTLH), 474–495 (KLTH…MEAL), 497–518 (RLQV…LYRM), 520–541 (ALET…QLKK), 544–565 (QLGT…LGNC), and 567–588 (TLRT…ILAK).

This chain is Leucine-rich repeat-containing protein 40 (LRRC40), found in Gallus gallus (Chicken).